The following is a 374-amino-acid chain: Chaperone protein DnaJ (374 aa).

The region spanning 5–70 is the J domain; it reads DYYEVLGLEK…DKKANYDRFG (66 aa). The segment at 137 to 219 adopts a CR-type zinc-finger fold; the sequence is GVEKSINITR…CHGAGHVRKK (83 aa). Zn(2+) contacts are provided by Cys150, Cys153, Cys167, Cys170, Cys193, Cys196, Cys207, and Cys210. CXXCXGXG motif repeat units lie at residues 150 to 157, 167 to 174, 193 to 200, and 207 to 214; these read CETCGGTG, CDKCGGTG, CDKCGGRG, and CHECHGAG.

It belongs to the DnaJ family. In terms of assembly, homodimer. Requires Zn(2+) as cofactor.

It localises to the cytoplasm. Functionally, participates actively in the response to hyperosmotic and heat shock by preventing the aggregation of stress-denatured proteins and by disaggregating proteins, also in an autonomous, DnaK-independent fashion. Unfolded proteins bind initially to DnaJ; upon interaction with the DnaJ-bound protein, DnaK hydrolyzes its bound ATP, resulting in the formation of a stable complex. GrpE releases ADP from DnaK; ATP binding to DnaK triggers the release of the substrate protein, thus completing the reaction cycle. Several rounds of ATP-dependent interactions between DnaJ, DnaK and GrpE are required for fully efficient folding. Also involved, together with DnaK and GrpE, in the DNA replication of plasmids through activation of initiation proteins. In Clostridium acetobutylicum (strain ATCC 824 / DSM 792 / JCM 1419 / IAM 19013 / LMG 5710 / NBRC 13948 / NRRL B-527 / VKM B-1787 / 2291 / W), this protein is Chaperone protein DnaJ.